A 508-amino-acid chain; its full sequence is Ribonuclease Y (508 aa).

A KH domain is found at 198–264 (TVSVINLPND…RLTIEKLITD (67 aa)). The 94-residue stretch at 324-417 (VLTHSIEVAK…VQAADAVSAS (94 aa)) folds into the HD domain.

This sequence belongs to the RNase Y family.

Endoribonuclease that initiates mRNA decay. This Fusobacterium nucleatum subsp. nucleatum (strain ATCC 25586 / DSM 15643 / BCRC 10681 / CIP 101130 / JCM 8532 / KCTC 2640 / LMG 13131 / VPI 4355) protein is Ribonuclease Y.